We begin with the raw amino-acid sequence, 103 residues long: Histone H4 (103 aa).

Positions 1–14 are enriched in gly residues; the sequence is MSGRGKGGKGLGKG. The tract at residues 1–20 is disordered; the sequence is MSGRGKGGKGLGKGGAKRHR. Ser2 is modified (N-acetylserine). Residues Lys6 and Lys13 each carry the N6-acetyl-N6-methyllysine; alternate modification. At Lys17 the chain carries N6-acetyllysine. A DNA-binding region spans residues 17–21; the sequence is KRHRK. N6-methyllysine is present on Lys21.

The protein belongs to the histone H4 family. In terms of assembly, the nucleosome is a histone octamer containing two molecules each of H2A, H2B, H3 and H4 assembled in one H3-H4 heterotetramer and two H2A-H2B heterodimers. The octamer wraps approximately 147 bp of DNA.

Its subcellular location is the nucleus. It localises to the chromosome. In terms of biological role, core component of nucleosome. Nucleosomes wrap and compact DNA into chromatin, limiting DNA accessibility to the cellular machineries which require DNA as a template. Histones thereby play a central role in transcription regulation, DNA repair, DNA replication and chromosomal stability. DNA accessibility is regulated via a complex set of post-translational modifications of histones, also called histone code, and nucleosome remodeling. This chain is Histone H4 (H4DEKL), found in Dendronephthya klunzingeri (Klunzinger's soft coral).